We begin with the raw amino-acid sequence, 328 residues long: Versiconal hemiacetal acetate esterase (328 aa).

Residues 82 to 84 carry the Involved in the stabilization of the negatively charged intermediate by the formation of the oxyanion hole motif; that stretch reads HGG. Active-site residues include Ser-156, Asp-260, and His-290.

Belongs to the 'GDXG' lipolytic enzyme family.

It catalyses the reaction (2S,3S)-versiconal hemiacetal acetate + H2O = (2S-3S)-versiconal hemiacetal + acetate + H(+). The catalysed reaction is (3S)-versiconol acetate + H2O = (S)-versiconol + acetate + H(+). The protein operates within mycotoxin biosynthesis. In terms of biological role, versiconal hemiacetal acetate esterase; part of the fragmented gene cluster that mediates the biosynthesis of dothistromin (DOTH), a polyketide toxin very similar in structure to the aflatoxin precursor, versicolorin B. The first step of the pathway is the conversion of acetate to norsolorinic acid (NOR) and requires the fatty acid synthase subunits hexA and hexB, as well as the polyketide synthase pksA. PksA combines a hexanoyl starter unit and 7 malonyl-CoA extender units to synthesize the precursor NOR. The hexanoyl starter unit is provided to the acyl-carrier protein (ACP) domain by the fungal fatty acid synthase hexA/hexB. The second step is the conversion of NOR to averantin (AVN) and requires the norsolorinic acid ketoreductase nor1, which catalyzes the dehydration of norsolorinic acid to form (1'S)-averantin. The cytochrome P450 monooxygenase avnA then catalyzes the hydroxylation of AVN to 5'hydroxyaverantin (HAVN). The next step is performed by adhA that transforms HAVN to averufin (AVF). Averufin might then be converted to hydroxyversicolorone by cypX and avfA. Hydroxyversicolorone is further converted versiconal hemiacetal acetate (VHA) by moxY. VHA is then the substrate for the versiconal hemiacetal acetate esterase est1 to yield versiconal (VAL). Versicolorin B synthase vbsA then converts VAL to versicolorin B (VERB) by closing the bisfuran ring. Then, the activity of the versicolorin B desaturase verB leads to versicolorin A (VERA). DotB, a predicted chloroperoxidase, may perform epoxidation of the A-ring of VERA. Alternatively, a cytochrome P450, such as cypX or avnA could catalyze this step. It is also possible that another, uncharacterized, cytochrome P450 enzyme is responsible for this step. Opening of the epoxide could potentially be achieved by the epoxide hydrolase epoA. However, epoA seems not to be required for DOTH biosynthesis, but other epoxide hydrolases may have the ability to complement this hydrolysis. Alternatively, opening of the epoxide ring could be achieved non-enzymatically. The next step is the deoxygenation of ring A to yield the 5,8-dihydroxyanthraquinone which is most likely catalyzed by the NADPH dehydrogenase encoded by ver1. The last stages of DOTH biosynthesis are proposed to involve hydroxylation of the bisfuran. OrdB and norB might have oxidative roles here. An alternative possibility is that cytochrome P450 monoogenases such as avnA and cypX might perform these steps in addition to previously proposed steps. The protein is Versiconal hemiacetal acetate esterase of Dothistroma septosporum (strain NZE10 / CBS 128990) (Red band needle blight fungus).